A 433-amino-acid chain; its full sequence is Aspartate--tRNA(Asp/Asn) ligase (433 aa).

Glu-167 contributes to the L-aspartate binding site. Residues 189–192 (QLFK) form an aspartate region. L-aspartate is bound at residue Arg-211. ATP-binding positions include 211–213 (RAE), 219–221 (RHL), and Glu-356. Positions 356 and 359 each coordinate Mg(2+). L-aspartate contacts are provided by Ser-359 and Arg-363. Residue 404 to 407 (GGER) participates in ATP binding.

Belongs to the class-II aminoacyl-tRNA synthetase family. Type 2 subfamily. In terms of assembly, homodimer. It depends on Mg(2+) as a cofactor.

It localises to the cytoplasm. It carries out the reaction tRNA(Asx) + L-aspartate + ATP = L-aspartyl-tRNA(Asx) + AMP + diphosphate. In terms of biological role, aspartyl-tRNA synthetase with relaxed tRNA specificity since it is able to aspartylate not only its cognate tRNA(Asp) but also tRNA(Asn). Reaction proceeds in two steps: L-aspartate is first activated by ATP to form Asp-AMP and then transferred to the acceptor end of tRNA(Asp/Asn). In Haloferax volcanii (Halobacterium volcanii), this protein is Aspartate--tRNA(Asp/Asn) ligase.